The chain runs to 381 residues: Acetylornithine deacetylase (381 aa).

Residue H79 participates in Zn(2+) binding. D81 is a catalytic residue. D111 provides a ligand contact to Zn(2+). E143 is an active-site residue. Residues E144, E168, and H354 each coordinate Zn(2+).

It belongs to the peptidase M20A family. ArgE subfamily. In terms of assembly, homodimer. Zn(2+) serves as cofactor. Co(2+) is required as a cofactor. The cofactor is glutathione.

Its subcellular location is the cytoplasm. The enzyme catalyses N(2)-acetyl-L-ornithine + H2O = L-ornithine + acetate. It functions in the pathway amino-acid biosynthesis; L-arginine biosynthesis; L-ornithine from N(2)-acetyl-L-ornithine (linear): step 1/1. Catalyzes the hydrolysis of the amide bond of N(2)-acetylated L-amino acids. Cleaves the acetyl group from N-acetyl-L-ornithine to form L-ornithine, an intermediate in L-arginine biosynthesis pathway, and a branchpoint in the synthesis of polyamines. This is Acetylornithine deacetylase from Buchnera aphidicola subsp. Acyrthosiphon pisum (strain Tuc7).